The chain runs to 307 residues: Chlorophyll a-b binding protein 1, chloroplastic (307 aa).

The N-terminal 44 residues, 1-44 (MAPYSVVASVLAAAPPQQSGSVRQLPSTINRAITQRSQSRHVAS), are a transit peptide targeting the chloroplast. The interval 34 to 54 (TQRSQSRHVASASSASSPTTM) is disordered. Chlorophyll a is bound by residues T52, E63, I64, G65, Y68, L81, P86, R89, G90, F91, and D92. L96 is a binding site for loroxanthin. A helical membrane pass occupies residues 111-143 (NYDESRLRWLLEGELYNGRLAMLAVVGVLTVEA). 5 residues coordinate chlorophyll a: L120, E124, N127, M132, and K146. W149 serves as a coordination point for loroxanthin. Chlorophyll a is bound by residues E151, Y163, H171, E178, R181, E190, R198, and D200. A helical transmembrane segment spans residues 161–186 (TPYVVAVVGGHLAFALLEKKRLENFR). D200 and L202 together coordinate all-trans-violaxanthin. Positions 204, 208, 214, 215, 218, 222, and 224 each coordinate chlorophyll a. The chain crosses the membrane as a helical span at residues 213–238 (DYNRQAEVRNCRLAMLTFLGFSVQAW). Residue F230 participates in loroxanthin binding. F233 is a binding site for all-trans-violaxanthin. Q236 is a binding site for chlorophyll a. P244 serves as a coordination point for all-trans-violaxanthin. Chlorophyll a is bound by residues N247, H251, P255, F256, A258, N259, I260, and F274. A helical membrane pass occupies residues 265–289 (DRGTNVVAIFSAFAAVMHIAELARE).

The protein belongs to the light-harvesting chlorophyll a/b-binding (LHC) protein family. As to quaternary structure, homooligomer. Component of a light-harvesting complex (LHC) consisting of 11 chlorophyll a-b binding proteins. Binds 11 chlorophylls (Chl-a and Chl-b) and the 2 carotenoids violaxanthin and loroxanthin. is required as a cofactor.

It localises to the plastid. The protein localises to the chloroplast thylakoid membrane. Functionally, component of a light-harvesting complex (LHC). The LHC functions as a light receptor, it captures and delivers excitation energy to photosystems with which it is closely associated. Functions in a far-red LHC by absorbing far-red light and promoting photosystem II (PSII) excitation, likely with entropy-driven uphill excitation energy transfer. Exhibits a typical absorption band at 671 nm (Qy band), as well as a large far-red absorption band at 706.5 together with fluorescence emission at around 713 nm (F713). The polypeptide is Chlorophyll a-b binding protein 1, chloroplastic (Prasiola crispa (Green alga)).